A 160-amino-acid polypeptide reads, in one-letter code: MTDQQAEARSYLSEEMIAEFKAAFDMFDADGGGDISVKELGTVMRMLGQTPTKEELDAIIEEVDEDGSGTIDFEEFLVMMVRQMKEDAKGKSEEELAECFRIFDRNADGYIDAEELAEIFRASGEHVTEEEIESLMKDGDKNNDGRIDFDEFLKMMEGVQ.

Thr-2 is modified (N-acetylthreonine). EF-hand domains follow at residues 15–50, 51–86, 91–126, and 127–160; these read EMIA…LGQT, PTKE…QMKE, KSEE…SGEH, and VTEE…EGVQ. Residues Asp-28, Asp-30, Asp-34, Glu-39, Asp-64, Asp-66, Ser-68, Thr-70, Glu-75, Asp-104, Asn-106, Asp-108, Tyr-110, Glu-115, Asp-140, Asn-142, Asp-144, Arg-146, and Glu-151 each coordinate Ca(2+).

The protein belongs to the troponin C family. In terms of tissue distribution, fast skeletal muscle.

In terms of biological role, troponin is the central regulatory protein of striated muscle contraction. Tn consists of three components: Tn-I which is the inhibitor of actomyosin ATPase, Tn-T which contains the binding site for tropomyosin and Tn-C. The binding of calcium to Tn-C abolishes the inhibitory action of Tn on actin filaments. The sequence is that of Troponin C, skeletal muscle (Tnnc2) from Mus musculus (Mouse).